The primary structure comprises 625 residues: Chaperone protein HtpG (625 aa).

The a; substrate-binding stretch occupies residues 1–332 (MSKKTNAPVQ…TEDLSLNVSR (332 aa)). The b stretch occupies residues 333 to 545 (EVVQSSPVMA…KDAMDSQMER (213 aa)). The segment at 546-625 (MMKMMQQEMP…ELIEAATLSR (80 aa)) is c.

This sequence belongs to the heat shock protein 90 family. In terms of assembly, homodimer.

The protein localises to the cytoplasm. In terms of biological role, molecular chaperone. Has ATPase activity. This Chlorobium phaeovibrioides (strain DSM 265 / 1930) (Prosthecochloris vibrioformis (strain DSM 265)) protein is Chaperone protein HtpG.